A 518-amino-acid polypeptide reads, in one-letter code: Motile sperm domain-containing protein 2 (518 aa).

At 1–496 (MAENHAQNKA…QVQRCIWFQQ (496 aa)) the chain is on the cytoplasmic side. A CRAL-TRIO domain is found at 82–239 (ESSIPRWLLE…HMGGTDPFKY (158 aa)). Positions 252–308 (PLCENGPITSEDETSSKEDIESDGKETLETISNEEQTPLLKKINPTESTSKAEENEK) are disordered. Positions 265–279 (TSSKEDIESDGKETL) are enriched in basic and acidic residues. The MSP domain maps to 327–445 (LLHISPAEEL…MEHRLRCHTV (119 aa)). The segment at 365-366 (RT) is required for FFAT motif binding and phosphorylated FFAT motif binding. A helical; Anchor for type IV membrane protein membrane pass occupies residues 497–518 (LLLSLTMLLLAFVTSFFYLLYS).

In terms of assembly, homooligomer. Interacts (via MSP domain) with STARD3NL (via FFAT motif), RMDN3 (via FFAT motif), OSBPL1A (via FFAT motif) and CERT1 (via FFAT motif). Interacts (via MSP domain) with STARD3 (via phosphorylated FFAT motif); this interaction depends on the critical phosphorylation of STARD3 on 'Ser-209'. Interacts with RB1CC1 (via phosphorylated FFAT motif), MIGA2 (via phosphorylated FFAT motif) and OSBPL1A (via FFAT motif). In terms of tissue distribution, highly expressed in CD14(+) monocytes, and at lower levels in neutrophils. Does not show significant expression in B-cells or T-cells.

It is found in the endoplasmic reticulum membrane. Functionally, endoplasmic reticulum-anchored protein that mediates the formation of contact sites between the endoplasmic (ER) and endosomes, mitochondria or Golgi through interaction with conventional- and phosphorylated-FFAT-containing organelle-bound proteins. In addition, forms endoplasmic reticulum (ER)-lipid droplets (LDs) contacts through a direct protein-membrane interaction and participates in LDs homeostasis. The attachment mechanism involves an amphipathic helix that has an affinity for lipid packing defects present at the surface of LDs. Promotes migration of primary monocytes and neutrophils, in response to various chemokines. This is Motile sperm domain-containing protein 2 from Homo sapiens (Human).